Consider the following 286-residue polypeptide: Sulfate transport system permease protein CysT (286 aa).

7 consecutive transmembrane segments (helical) span residues 27 to 47 (WVVT…ALLV), 74 to 94 (FITA…VAWV), 108 to 128 (AMVD…LATL), 146 to 166 (IAFS…PFIV), 195 to 215 (FWRV…ALGF), 224 to 244 (SVVL…VLVF), and 257 to 276 (VIGA…INLL). One can recognise an ABC transmembrane type-1 domain in the interval 70–273 (YNVTFITALA…SVSLILLLII (204 aa)).

It belongs to the binding-protein-dependent transport system permease family. CysTW subfamily. In terms of assembly, the complex is composed of two ATP-binding proteins (CysA), two transmembrane proteins (CysT and CysW) and a solute-binding protein (CysP).

The protein resides in the cell inner membrane. Functionally, part of the ABC transporter complex CysAWTP (TC 3.A.1.6.1) involved in sulfate/thiosulfate import. Probably responsible for the translocation of the substrate across the membrane. This Synechocystis sp. (strain ATCC 27184 / PCC 6803 / Kazusa) protein is Sulfate transport system permease protein CysT (cysT).